A 392-amino-acid polypeptide reads, in one-letter code: Phospho-N-acetylmuramoyl-pentapeptide-transferase (392 aa).

Transmembrane regions (helical) follow at residues 24–44 (YLTF…LLAG), 76–96 (TMGG…WFDL), 100–120 (FVWV…VDDW), 137–157 (YFWQ…CISE), 193–213 (VSYP…IVGS), 225–245 (GLAI…AYVT), 262–282 (AGEL…FLWF), 289–309 (VFMG…IAII), 314–334 (IVLA…MLQV), and 369–389 (QVVV…LTTL).

The protein belongs to the glycosyltransferase 4 family. MraY subfamily. Mg(2+) is required as a cofactor.

It is found in the cell inner membrane. It carries out the reaction UDP-N-acetyl-alpha-D-muramoyl-L-alanyl-gamma-D-glutamyl-meso-2,6-diaminopimeloyl-D-alanyl-D-alanine + di-trans,octa-cis-undecaprenyl phosphate = di-trans,octa-cis-undecaprenyl diphospho-N-acetyl-alpha-D-muramoyl-L-alanyl-D-glutamyl-meso-2,6-diaminopimeloyl-D-alanyl-D-alanine + UMP. It functions in the pathway cell wall biogenesis; peptidoglycan biosynthesis. Its function is as follows. Catalyzes the initial step of the lipid cycle reactions in the biosynthesis of the cell wall peptidoglycan: transfers peptidoglycan precursor phospho-MurNAc-pentapeptide from UDP-MurNAc-pentapeptide onto the lipid carrier undecaprenyl phosphate, yielding undecaprenyl-pyrophosphoryl-MurNAc-pentapeptide, known as lipid I. The chain is Phospho-N-acetylmuramoyl-pentapeptide-transferase from Paracidovorax citrulli (strain AAC00-1) (Acidovorax citrulli).